Here is a 143-residue protein sequence, read N- to C-terminus: Nucleoside diphosphate kinase (143 aa).

6 residues coordinate ATP: K11, F59, R87, T93, R104, and N114. Catalysis depends on H117, which acts as the Pros-phosphohistidine intermediate.

It belongs to the NDK family. In terms of assembly, homotetramer. Requires Mg(2+) as cofactor.

Its subcellular location is the cytoplasm. It carries out the reaction a 2'-deoxyribonucleoside 5'-diphosphate + ATP = a 2'-deoxyribonucleoside 5'-triphosphate + ADP. It catalyses the reaction a ribonucleoside 5'-diphosphate + ATP = a ribonucleoside 5'-triphosphate + ADP. Major role in the synthesis of nucleoside triphosphates other than ATP. The ATP gamma phosphate is transferred to the NDP beta phosphate via a ping-pong mechanism, using a phosphorylated active-site intermediate. This Escherichia coli O7:K1 (strain IAI39 / ExPEC) protein is Nucleoside diphosphate kinase.